The following is a 630-amino-acid chain: MKVLLIHSDYLEFEAKQKTKIAEDTDILNGKMEECLTVFMAVEKEDEENPQNVIYNTVDEIIKTAENLKINNVVVYPYAHLSSELSSPKVAKEVLQKIEEELKQKNYSVLRAPFGWYKSFKISCKGHPLSELSRKITTERKEEKGETEAKDRPKNKFYILDGEKGEEGLKELDEKKVKKLKDKGLKSVAMHEMGIKHGGKEKDIEPPHVKFITEKEICDYEPSSDAGHFRWYPKGKLIRDLLQDYVYNMVVENNGMPVETPVMYDLGNKAIKEHADKFGERQYRFKQGNKDLMLRFAACFGQFMMKKDMYILPKHLPLKLYELSTYSFRYEQRGELVGLKRLRGFTMPDMHTVCKDTKQTIEEFENQFWMCLKTGDDLNTPYSTIFRFTEDFFEENKEWFFKVAKEYKEKYGKDVILELIPERKHYWVGKVDMAVIDSFGRPIENPTVQIDVESAKRFNIVVHDGNEKTYPVILHCSPTGSIERVLCGLLEKASLDADAGAPPMLPVWLSPIQARVIPVADAHSEYALSVAKKLRENGIRADFDDREESVGKKIRNAGKDWVPFVIVIGDKEVENNILTTTIREKSTLKKPVKENLTVEELIEKIKEETKGFPYRPLSLPLYCSLQPIFR.

The interval 1-137 (MKVLLIHSDY…PLSELSRKIT (137 aa)) is editing domain. Residues 207-506 (PHVKFITEKE…ADAGAPPMLP (300 aa)) form a catalytic region. Residues Cys-299, His-351, and His-475 each coordinate Zn(2+).

This sequence belongs to the class-II aminoacyl-tRNA synthetase family. Homodimer. It depends on Zn(2+) as a cofactor.

It is found in the cytoplasm. The enzyme catalyses tRNA(Thr) + L-threonine + ATP = L-threonyl-tRNA(Thr) + AMP + diphosphate + H(+). Its function is as follows. Catalyzes the attachment of threonine to tRNA(Thr) in a two-step reaction: L-threonine is first activated by ATP to form Thr-AMP and then transferred to the acceptor end of tRNA(Thr). Also edits incorrectly charged L-seryl-tRNA(Thr). This is Threonine--tRNA ligase from Methanococcus aeolicus (strain ATCC BAA-1280 / DSM 17508 / OCM 812 / Nankai-3).